We begin with the raw amino-acid sequence, 268 residues long: Ribosomal RNA small subunit methyltransferase A (268 aa).

Asn-16, Leu-18, Gly-43, Glu-64, Asp-89, and Asn-110 together coordinate S-adenosyl-L-methionine.

The protein belongs to the class I-like SAM-binding methyltransferase superfamily. rRNA adenine N(6)-methyltransferase family. RsmA subfamily.

Its subcellular location is the cytoplasm. The catalysed reaction is adenosine(1518)/adenosine(1519) in 16S rRNA + 4 S-adenosyl-L-methionine = N(6)-dimethyladenosine(1518)/N(6)-dimethyladenosine(1519) in 16S rRNA + 4 S-adenosyl-L-homocysteine + 4 H(+). Its function is as follows. Specifically dimethylates two adjacent adenosines (A1518 and A1519) in the loop of a conserved hairpin near the 3'-end of 16S rRNA in the 30S particle. May play a critical role in biogenesis of 30S subunits. In Pseudomonas syringae pv. syringae (strain B728a), this protein is Ribosomal RNA small subunit methyltransferase A.